The following is a 90-amino-acid chain: Small ribosomal subunit protein bS18 (90 aa).

It belongs to the bacterial ribosomal protein bS18 family. In terms of assembly, part of the 30S ribosomal subunit. Forms a tight heterodimer with protein bS6.

Binds as a heterodimer with protein bS6 to the central domain of the 16S rRNA, where it helps stabilize the platform of the 30S subunit. The protein is Small ribosomal subunit protein bS18 of Bacteroides fragilis (strain YCH46).